The chain runs to 116 residues: UPF0342 protein lhv_1666 (116 aa).

It belongs to the UPF0342 family.

This chain is UPF0342 protein lhv_1666, found in Lactobacillus helveticus (strain DPC 4571).